Consider the following 324-residue polypeptide: UDP-N-acetylenolpyruvoylglucosamine reductase (324 aa).

In terms of domain architecture, FAD-binding PCMH-type spans 36-203 (FRAGGLAELM…THAIFEGYAE (168 aa)). R183 is a catalytic residue. S232 acts as the Proton donor in catalysis. Residue E302 is part of the active site.

The protein belongs to the MurB family. The cofactor is FAD.

It is found in the cytoplasm. It carries out the reaction UDP-N-acetyl-alpha-D-muramate + NADP(+) = UDP-N-acetyl-3-O-(1-carboxyvinyl)-alpha-D-glucosamine + NADPH + H(+). It functions in the pathway cell wall biogenesis; peptidoglycan biosynthesis. Cell wall formation. The polypeptide is UDP-N-acetylenolpyruvoylglucosamine reductase (Rhizobium meliloti (strain 1021) (Ensifer meliloti)).